The primary structure comprises 59 residues: Large ribosomal subunit protein uL30 (59 aa).

This sequence belongs to the universal ribosomal protein uL30 family. Part of the 50S ribosomal subunit.

The chain is Large ribosomal subunit protein uL30 from Clostridium botulinum (strain 657 / Type Ba4).